Here is a 126-residue protein sequence, read N- to C-terminus: Cysteine-rich tail protein 1 (126 aa).

Residues 1 to 89 form a disordered region; the sequence is MDPHETLVKN…PAGLAYAGPP (89 aa).

This sequence belongs to the CYSRT1 family. As to quaternary structure, interacts with components of the late cornfied envelope (LCE).

It is found in the cornified envelope. In terms of biological role, component of the stratum corneum that may contribute to epidermal antimicrobial host defenses. The protein is Cysteine-rich tail protein 1 (CYSRT1) of Bos taurus (Bovine).